A 219-amino-acid chain; its full sequence is Large ribosomal subunit protein uL4 (219 aa).

The segment at alanine 43–glutamine 100 is disordered.

The protein belongs to the universal ribosomal protein uL4 family. Part of the 50S ribosomal subunit.

Functionally, one of the primary rRNA binding proteins, this protein initially binds near the 5'-end of the 23S rRNA. It is important during the early stages of 50S assembly. It makes multiple contacts with different domains of the 23S rRNA in the assembled 50S subunit and ribosome. In terms of biological role, forms part of the polypeptide exit tunnel. The polypeptide is Large ribosomal subunit protein uL4 (Mycobacterium sp. (strain JLS)).